A 155-amino-acid chain; its full sequence is Putative ATP synthase protein YMF19-like protein (155 aa).

Transmembrane regions (helical) follow at residues 23–43 (FLWL…VLVF), 89–109 (WRAL…LGSF), and 117–137 (VDFG…LFFF).

It belongs to the ATPase protein YMF19 family.

The protein localises to the mitochondrion membrane. This is Putative ATP synthase protein YMF19-like protein (YMF18) from Marchantia polymorpha (Common liverwort).